A 147-amino-acid chain; its full sequence is SPI-1 type 3 secretion system pilotin (147 aa).

An N-terminal signal peptide occupies residues 1 to 15 (MKKFYSCLPVFLLIG). The N-palmitoyl cysteine moiety is linked to residue Cys16. The S-diacylglycerol cysteine moiety is linked to residue Cys16.

This sequence belongs to the InvH family.

Its subcellular location is the cell outer membrane. Involved in the synthesis of the type III secretion system (T3SS), also called injectisome, which is used to inject bacterial effector proteins into eukaryotic host cells. Pilot protein that is required for the proper localization of the secretin InvG/SctC in the outer membrane. Necessary for efficient adherence and entry of these organisms into cultured epithelial cells. This chain is SPI-1 type 3 secretion system pilotin, found in Salmonella typhimurium (strain SL1344).